We begin with the raw amino-acid sequence, 291 residues long: Undecaprenyl-diphosphatase (291 aa).

The next 8 helical transmembrane spans lie at 1 to 21, 48 to 68, 102 to 122, 126 to 146, 162 to 182, 203 to 223, 231 to 251, and 267 to 287; these read MFII…LTEF, SAFT…AWVF, LHVL…DDFI, LFSV…MIIA, ISYF…WPGF, SDFT…LSLL, IADI…GLIA, and FAIY…GFGI.

Belongs to the UppP family.

It is found in the cell membrane. It catalyses the reaction di-trans,octa-cis-undecaprenyl diphosphate + H2O = di-trans,octa-cis-undecaprenyl phosphate + phosphate + H(+). Its function is as follows. Catalyzes the dephosphorylation of undecaprenyl diphosphate (UPP). Confers resistance to bacitracin. The chain is Undecaprenyl-diphosphatase from Staphylococcus aureus (strain COL).